Here is a 199-residue protein sequence, read N- to C-terminus: GTP cyclohydrolase-2 (199 aa).

52–56 (RMHSE) lines the GTP pocket. Cys-57, Cys-68, and Cys-70 together coordinate Zn(2+). Residues Gln-73, 94–96 (EGR), and Thr-116 each bind GTP. The active-site Proton acceptor is the Asp-128. Arg-130 functions as the Nucleophile in the catalytic mechanism. GTP contacts are provided by Thr-151 and Lys-156.

The protein belongs to the GTP cyclohydrolase II family. Zn(2+) is required as a cofactor.

The catalysed reaction is GTP + 4 H2O = 2,5-diamino-6-hydroxy-4-(5-phosphoribosylamino)-pyrimidine + formate + 2 phosphate + 3 H(+). It participates in cofactor biosynthesis; riboflavin biosynthesis; 5-amino-6-(D-ribitylamino)uracil from GTP: step 1/4. Catalyzes the conversion of GTP to 2,5-diamino-6-ribosylamino-4(3H)-pyrimidinone 5'-phosphate (DARP), formate and pyrophosphate. This is GTP cyclohydrolase-2 from Aliivibrio salmonicida (strain LFI1238) (Vibrio salmonicida (strain LFI1238)).